We begin with the raw amino-acid sequence, 548 residues long: (S)-beta-macrocarpene synthase (548 aa).

Mg(2+) is bound by residues Asp-302 and Asp-306. Residues Asp-302, Asp-306, Arg-443, and Asn-446 each contribute to the substrate site. The DDXXD motif signature appears at Asp-302–Asp-306. Asn-446, Ser-450, and Glu-454 together coordinate Mg(2+).

The protein belongs to the terpene synthase family. In terms of assembly, monomer. The cofactor is Mg(2+). Requires Mn(2+) as cofactor. As to expression, expressed in roots. Not detected in leaves, unless damaged by herbivory or infected by fungi.

It localises to the cytoplasm. It catalyses the reaction (S)-beta-bisabolene = (S)-beta-macrocarpene. The catalysed reaction is (2E,6E)-farnesyl diphosphate = (S)-beta-bisabolene + diphosphate. The enzyme catalyses (2E)-geranyl diphosphate = (4S)-limonene + diphosphate. It carries out the reaction (2E)-geranyl diphosphate = beta-myrcene + diphosphate. It catalyses the reaction (2E)-geranyl diphosphate = terpinolene + diphosphate. The catalysed reaction is (2E)-geranyl diphosphate + H2O = (S)-linalool + diphosphate. It functions in the pathway secondary metabolite biosynthesis; terpenoid biosynthesis. Functionally, involved in the biosynthesis of the bicyclic sesquiterpene (S)-beta-macrocarpene. Can use both geranyl diphosphate and farnesyl diphosphate as substrate, but not geranylgeranyl diphosphate. Produces mainly (S)-beta-macrocarpene, but also smaller amounts of beta-bisabolene and (E)-beta-farnesene when used with farnesyl diphosphate as substrate. In the presence of geranyl diphosphate, produces the acyclic monoterpenes beta-myrcene and linalool along with minor amounts of the cyclic compounds limonene, alpha-thujene, sabinene and alpha-terpinolene. May be involved in plant defense. The chain is (S)-beta-macrocarpene synthase from Zea mays (Maize).